The sequence spans 600 residues: DNA repair and recombination protein mus-11 (600 aa).

A DNA-binding region spans residues 148-152 (KRALR). Positions 268-319 (LNPQAQQSRPLSRSGSTGSLNTRQQPQNSHQFTARAQSRPPQQQLNSNQSRP) are enriched in polar residues. 2 disordered regions span residues 268–357 (LNPQ…AGAA) and 387–600 (APKP…QRLA). 2 stretches are compositionally biased toward low complexity: residues 325 to 343 (NNSS…TTPQ) and 458 to 470 (ARSA…RAGP). A compositionally biased stretch (polar residues) spans 502–512 (GFSSSPSTNRG). Composition is skewed to low complexity over residues 540–564 (SATT…APSA) and 577–591 (ANAS…ATSG).

The protein belongs to the RAD52 family. In terms of assembly, part of a complex that includes mei-3/rad51 and mus-11/rad52.

It localises to the nucleus. In terms of biological role, involved in DNA double-strand break (DSB) repair and recombination. Promotes the annealing of complementary single-stranded DNA and by stimulation of the mei-3/rad51 recombinase. The chain is DNA repair and recombination protein mus-11 (mus-11) from Neurospora crassa (strain ATCC 24698 / 74-OR23-1A / CBS 708.71 / DSM 1257 / FGSC 987).